Reading from the N-terminus, the 1529-residue chain is DNA-directed RNA polymerase subunit beta' (1529 aa).

Zn(2+)-binding residues include cysteine 156, cysteine 158, cysteine 183, and cysteine 186. Positions 1328, 1330, and 1332 each coordinate Mg(2+).

Belongs to the RNA polymerase beta' chain family. RpoC1 subfamily. In plastids the minimal PEP RNA polymerase catalytic core is composed of four subunits: alpha, beta, beta', and beta''. When a (nuclear-encoded) sigma factor is associated with the core the holoenzyme is formed, which can initiate transcription. The cofactor is Mg(2+). Zn(2+) serves as cofactor.

It is found in the plastid. The protein resides in the chloroplast. It catalyses the reaction RNA(n) + a ribonucleoside 5'-triphosphate = RNA(n+1) + diphosphate. DNA-dependent RNA polymerase catalyzes the transcription of DNA into RNA using the four ribonucleoside triphosphates as substrates. This is DNA-directed RNA polymerase subunit beta' from Tetradesmus obliquus (Green alga).